Reading from the N-terminus, the 312-residue chain is Ribonuclease Z (312 aa).

Zn(2+) is bound by residues H63, H65, D67, H68, H141, D212, and H270. D67 acts as the Proton acceptor in catalysis.

Belongs to the RNase Z family. Homodimer. Zn(2+) is required as a cofactor.

It catalyses the reaction Endonucleolytic cleavage of RNA, removing extra 3' nucleotides from tRNA precursor, generating 3' termini of tRNAs. A 3'-hydroxy group is left at the tRNA terminus and a 5'-phosphoryl group is left at the trailer molecule.. Its function is as follows. Zinc phosphodiesterase, which displays some tRNA 3'-processing endonuclease activity. Probably involved in tRNA maturation, by removing a 3'-trailer from precursor tRNA. In Lactobacillus acidophilus (strain ATCC 700396 / NCK56 / N2 / NCFM), this protein is Ribonuclease Z.